The sequence spans 167 residues: Dimethylamine corrinoid protein 3 (167 aa).

Residues 1–44 (MNEVGVRFERGKLFLPHVMMAADAMTAGVNALKDLMPEGSASSK) enclose the B12-binding N-terminal domain. Residues 45 to 167 (MGVIVNGTVE…AVTKAKELLA (123 aa)) enclose the B12-binding domain. His58 contributes to the methylcob(III)alamin binding site.

The protein belongs to the methylamine corrinoid protein family.

It functions in the pathway one-carbon metabolism; methanogenesis from dimethylamine. Acts as a methyl group carrier between MtbB and MtbA. The sequence is that of Dimethylamine corrinoid protein 3 (mtbC3) from Methanosarcina mazei (strain ATCC BAA-159 / DSM 3647 / Goe1 / Go1 / JCM 11833 / OCM 88) (Methanosarcina frisia).